Here is a 103-residue protein sequence, read N- to C-terminus: Pseudonajatoxin b homolog (103 aa).

Positions 1–21 (MKTLLLTLVVVTIVCLDLGYT) are cleaved as a signal peptide. Disulfide bonds link Cys24/Cys42, Cys35/Cys63, Cys48/Cys52, Cys67/Cys79, and Cys80/Cys85.

This sequence belongs to the three-finger toxin family. Long-chain subfamily. Type II alpha-neurotoxin sub-subfamily. Expressed by the venom gland.

Its subcellular location is the secreted. Functionally, binds with high affinity to muscular (alpha-1/CHRNA1) and neuronal (alpha-7/CHRNA7) nicotinic acetylcholine receptor (nAChR) and inhibits acetylcholine from binding to the receptor, thereby impairing neuromuscular and neuronal transmission. The polypeptide is Pseudonajatoxin b homolog (Pseudonaja textilis (Eastern brown snake)).